The chain runs to 405 residues: Argininosuccinate synthase (405 aa).

12–20 (AYSGGLDTS) serves as a coordination point for ATP. Positions 90 and 95 each coordinate L-citrulline. ATP is bound at residue G120. Positions 122, 126, and 127 each coordinate L-aspartate. An L-citrulline-binding site is contributed by N126. L-citrulline-binding residues include R130, S179, S188, E265, and Y277.

It belongs to the argininosuccinate synthase family. Type 1 subfamily. In terms of assembly, homotetramer.

It localises to the cytoplasm. It catalyses the reaction L-citrulline + L-aspartate + ATP = 2-(N(omega)-L-arginino)succinate + AMP + diphosphate + H(+). It participates in amino-acid biosynthesis; L-arginine biosynthesis; L-arginine from L-ornithine and carbamoyl phosphate: step 2/3. The protein is Argininosuccinate synthase of Clostridium perfringens (strain 13 / Type A).